A 176-amino-acid polypeptide reads, in one-letter code: Peptidoglycan-associated lipoprotein (176 aa).

The signal sequence occupies residues 1–32 (MSRIDTPAASRMQTIARNPVMIALVMTLALAG). The N-palmitoyl cysteine moiety is linked to residue Cys33. The S-diacylglycerol cysteine moiety is linked to residue Cys33. The OmpA-like domain occupies 58-175 (QQDFTVNVGD…RAVTVLGGAG (118 aa)).

This sequence belongs to the Pal lipoprotein family. The Tol-Pal system is composed of five core proteins: the inner membrane proteins TolA, TolQ and TolR, the periplasmic protein TolB and the outer membrane protein Pal. They form a network linking the inner and outer membranes and the peptidoglycan layer.

Its subcellular location is the cell outer membrane. Its function is as follows. Part of the Tol-Pal system, which plays a role in outer membrane invagination during cell division and is important for maintaining outer membrane integrity. The sequence is that of Peptidoglycan-associated lipoprotein from Rhizobium meliloti (strain 1021) (Ensifer meliloti).